The sequence spans 194 residues: Small ribosomal subunit protein uS4c (194 aa).

Positions 13-36 are disordered; sequence GLTSKRPRSGSDPKNQLRSGKKSQ. The S4 RNA-binding domain maps to 82–143; the sequence is MRLDNILFRL…KQRSKALIQN (62 aa).

The protein belongs to the universal ribosomal protein uS4 family. Part of the 30S ribosomal subunit. Contacts protein S5. The interaction surface between S4 and S5 is involved in control of translational fidelity.

Its subcellular location is the plastid. It localises to the chloroplast. One of the primary rRNA binding proteins, it binds directly to 16S rRNA where it nucleates assembly of the body of the 30S subunit. Functionally, with S5 and S12 plays an important role in translational accuracy. This Moraea spathulata (Large yellow moraea) protein is Small ribosomal subunit protein uS4c (rps4).